The primary structure comprises 127 residues: uncharacterized protein (127 aa).

The disordered stretch occupies residues 1-24 (PLKTKPIDNNLPHRTGYNQASKQQ).

This is an uncharacterized protein from Homo sapiens (Human).